A 491-amino-acid polypeptide reads, in one-letter code: Protein nucleotidyltransferase YdiU (491 aa).

G94, G96, R97, K117, D129, G130, R180, and R187 together coordinate ATP. The Proton acceptor role is filled by D256. Mg(2+)-binding residues include N257 and D266. D266 serves as a coordination point for ATP.

It belongs to the SELO family. Mg(2+) is required as a cofactor. Mn(2+) serves as cofactor.

It carries out the reaction L-seryl-[protein] + ATP = 3-O-(5'-adenylyl)-L-seryl-[protein] + diphosphate. The enzyme catalyses L-threonyl-[protein] + ATP = 3-O-(5'-adenylyl)-L-threonyl-[protein] + diphosphate. It catalyses the reaction L-tyrosyl-[protein] + ATP = O-(5'-adenylyl)-L-tyrosyl-[protein] + diphosphate. The catalysed reaction is L-histidyl-[protein] + UTP = N(tele)-(5'-uridylyl)-L-histidyl-[protein] + diphosphate. It carries out the reaction L-seryl-[protein] + UTP = O-(5'-uridylyl)-L-seryl-[protein] + diphosphate. The enzyme catalyses L-tyrosyl-[protein] + UTP = O-(5'-uridylyl)-L-tyrosyl-[protein] + diphosphate. Its function is as follows. Nucleotidyltransferase involved in the post-translational modification of proteins. It can catalyze the addition of adenosine monophosphate (AMP) or uridine monophosphate (UMP) to a protein, resulting in modifications known as AMPylation and UMPylation. This chain is Protein nucleotidyltransferase YdiU, found in Clostridium botulinum (strain Okra / Type B1).